The following is a 51-amino-acid chain: Zinc metalloproteinase-disintegrin-like crovidisin (51 aa).

A Peptidase M12B domain is found at 1-12; it reads AMVTKNNGDLDK. The Disintegrin domain occupies 13 to 18; the sequence is SGTECR. Residue Asn-29 is glycosylated (N-linked (GlcNAc...) asparagine).

It belongs to the venom metalloproteinase (M12B) family. P-III subfamily. P-IIIa sub-subfamily. As to quaternary structure, monomer. The cofactor is Zn(2+). As to expression, expressed by the venom gland.

Its subcellular location is the secreted. In terms of biological role, snake venom zinc metalloproteinase-disintegrin-like that blocks the interaction between platelets and collagen fibers through its binding to collagen fibers, resulting in the blockade of collagen-mediated platelet functions such as adhesion, release reaction, thromboxane formation, and aggregation. Binds selectively to collagen type I with high affinity. Also exerts proteolytic activity to matrix. In Crotalus viridis viridis (Prairie rattlesnake), this protein is Zinc metalloproteinase-disintegrin-like crovidisin.